Reading from the N-terminus, the 347-residue chain is Transcription factor JunB (347 aa).

Residues K4, K33, and K36 each participate in a glycyl lysine isopeptide (Lys-Gly) (interchain with G-Cter in SUMO2) cross-link. The interval 50–77 is disordered; sequence LKAPGARGPGPEGNGGGSYFSSQGSDTG. Gly residues predominate over residues 56–67; sequence RGPGPEGNGGGS. Over residues 68-77 the composition is skewed to polar residues; the sequence is YFSSQGSDTG. Residue K81 forms a Glycyl lysine isopeptide (Lys-Gly) (interchain with G-Cter in SUMO2) linkage. Residues T102 and T104 each carry the phosphothreonine modification. Position 117 is a phosphoserine (S117). A Glycyl lysine isopeptide (Lys-Gly) (interchain with G-Cter in SUMO2) cross-link involves residue K141. K240 is modified (N6-acetyllysine; alternate). K240 participates in a covalent cross-link: Glycyl lysine isopeptide (Lys-Gly) (interchain with G-Cter in SUMO1); alternate. K240 participates in a covalent cross-link: Glycyl lysine isopeptide (Lys-Gly) (interchain with G-Cter in SUMO2); alternate. Basic and acidic residues predominate over residues 241–253; that stretch reads EEPQTVPEARSRD. Residues 241 to 260 form a disordered region; it reads EEPQTVPEARSRDATPPVSP. S251 carries the post-translational modification Phosphoserine. T255 carries the post-translational modification Phosphothreonine. S259 is modified (phosphoserine). Positions 268–295 are basic motif; sequence RIKVERKRLRNRLAATKCRKRKLERIAR. The bZIP domain maps to 268 to 331; it reads RIKVERKRLR…AQLKQKVMTH (64 aa). The leucine-zipper stretch occupies residues 296 to 324; it reads LEDKVKTLKAENAGLSSTAGLLREQVAQL. Residue K343 forms a Glycyl lysine isopeptide (Lys-Gly) (interchain with G-Cter in SUMO2) linkage.

This sequence belongs to the bZIP family. Jun subfamily. In terms of assembly, binds DNA as a homodimer or as a heterodimer with another member of the Jun/Fos family. Component of an AP-1 transcription factor complex composed of JUN-FOS heterodimers. As part of the AP-1 transcription factor complex, forms heterodimers with FOSB, thereby binding to the AP-1 consensus sequence and stimulating transcription. Interacts with ITCH (via its WW domains). Ubiquitinated by ITCH, leading to its degradation.

The protein localises to the nucleus. Its function is as follows. Transcription factor involved in regulating gene activity following the primary growth factor response. Binds to the DNA sequence 5'-TGA[GC]TCA-3'. Heterodimerizes with proteins of the FOS family to form an AP-1 transcription complex, thereby enhancing its DNA binding activity to an AP-1 consensus sequence and its transcriptional activity. The sequence is that of Transcription factor JunB (JUNB) from Bos taurus (Bovine).